The primary structure comprises 250 residues: Exotoxin type A (250 aa).

The first 30 residues, 1-30 (MENNKEVLKKMVFFVLMKFLGLTILPKGIC), serve as a signal peptide directing secretion. A disulfide bond links cysteine 117 and cysteine 128.

The protein belongs to the staphylococcal/streptococcal toxin family.

Causative agent of the symptoms associated with scarlet fever, have been associated with streptococcal toxic shock-like disease and may play a role in the early events of rheumatic fever. This is Exotoxin type A (speA) from Streptococcus pyogenes.